We begin with the raw amino-acid sequence, 140 residues long: Large ribosomal subunit protein uL16 (140 aa).

Over residues 1–16 (MLMPKRVKHRKQMKGR) the composition is skewed to basic residues. A disordered region spans residues 1-20 (MLMPKRVKHRKQMKGRMKGD).

This sequence belongs to the universal ribosomal protein uL16 family. In terms of assembly, part of the 50S ribosomal subunit.

Binds 23S rRNA and is also seen to make contacts with the A and possibly P site tRNAs. This is Large ribosomal subunit protein uL16 from Geobacter sulfurreducens (strain ATCC 51573 / DSM 12127 / PCA).